The primary structure comprises 197 residues: Segregation and condensation protein B (197 aa).

Belongs to the ScpB family. As to quaternary structure, homodimer. Homodimerization may be required to stabilize the binding of ScpA to the Smc head domains. Component of a cohesin-like complex composed of ScpA, ScpB and the Smc homodimer, in which ScpA and ScpB bind to the head domain of Smc. The presence of the three proteins is required for the association of the complex with DNA.

The protein localises to the cytoplasm. Functionally, participates in chromosomal partition during cell division. May act via the formation of a condensin-like complex containing Smc and ScpA that pull DNA away from mid-cell into both cell halves. The polypeptide is Segregation and condensation protein B (Bacillus licheniformis (strain ATCC 14580 / DSM 13 / JCM 2505 / CCUG 7422 / NBRC 12200 / NCIMB 9375 / NCTC 10341 / NRRL NRS-1264 / Gibson 46)).